The primary structure comprises 291 residues: Tryptophan synthase alpha chain (291 aa).

Active-site proton acceptor residues include E69 and D80.

Belongs to the TrpA family. As to quaternary structure, tetramer of two alpha and two beta chains.

The enzyme catalyses (1S,2R)-1-C-(indol-3-yl)glycerol 3-phosphate + L-serine = D-glyceraldehyde 3-phosphate + L-tryptophan + H2O. Its pathway is amino-acid biosynthesis; L-tryptophan biosynthesis; L-tryptophan from chorismate: step 5/5. Functionally, the alpha subunit is responsible for the aldol cleavage of indoleglycerol phosphate to indole and glyceraldehyde 3-phosphate. This chain is Tryptophan synthase alpha chain, found in Bifidobacterium longum (strain NCC 2705).